Here is a 670-residue protein sequence, read N- to C-terminus: MSESVLQRLEELKESLHYHAVRYYVEDNPEIPDAEYDRMMRELLDIEAEHPELVTVDSPSLRVGGQPLSEFSQVTHEVPMLSLDNAFDDAELDGFHKRAQDRVVGHTIKQYCCEPKLDGLAVSLLYENGVLVQAATRGDGTTGENITENVRTISAIPLKLQGKGWPTRLEVRGEVFMPKAGFDKLNENARKKGEKVFVNPRNAAAGSLRQLDSRITASRPLSFYAYSVGVVEGATLANSHYERFLQIKSWGLPMCPETKRVDSLEEVKAYYQDILTRREALAYEIDGVVIKVDDIAIQERLGFVARAPRWAIAYKFPAQEEITTLNEVEFQVGRTGAITPVAKLEPIFVGGVTVSNATLHNADEIERLQVMVGDQVVIRRAGDVIPQVVSVIKERRPETAREILFPDACPVCGSHVERIEGEAVTRCTGGLVCQAQRKEALKHFVSRKALDVDGLGDKVIEQLVDREMVETPADLFKLSAGVLTVLERMGPKSATNVVNALEKSKLTTLPRFLYSLGIREVGEATAANLAQYFKNLDAIQQATEEQLIEVQDIGVIVAKHITTFFGEEKNQAVVQDLLAQGINWPEIAAPQEGVELPLEGKTVVLTGTLSQLGRSEAKEALQNLGAKVTGSVSKKTDILFAGENAGSKLAKAQELGIEIQTEQDLLNLMK.

NAD(+)-binding positions include 33-37, 82-83, and E114; these read DAEYD and SL. K116 functions as the N6-AMP-lysine intermediate in the catalytic mechanism. The NAD(+) site is built by R137, E174, K291, and K315. The Zn(2+) site is built by C409, C412, C427, and C433. Residues 593–670 enclose the BRCT domain; it reads GVELPLEGKT…TEQDLLNLMK (78 aa).

It belongs to the NAD-dependent DNA ligase family. LigA subfamily. Mg(2+) serves as cofactor. Mn(2+) is required as a cofactor.

The catalysed reaction is NAD(+) + (deoxyribonucleotide)n-3'-hydroxyl + 5'-phospho-(deoxyribonucleotide)m = (deoxyribonucleotide)n+m + AMP + beta-nicotinamide D-nucleotide.. Its function is as follows. DNA ligase that catalyzes the formation of phosphodiester linkages between 5'-phosphoryl and 3'-hydroxyl groups in double-stranded DNA using NAD as a coenzyme and as the energy source for the reaction. It is essential for DNA replication and repair of damaged DNA. The chain is DNA ligase from Vibrio campbellii (strain ATCC BAA-1116).